We begin with the raw amino-acid sequence, 208 residues long: Small ribosomal subunit protein uS4 (208 aa).

The disordered stretch occupies residues 24 to 52 (GVKPFDVKTKKANKAPGQHGQARGGKQSE). An S4 RNA-binding domain is found at 98–160 (SRLDNVVYRM…AKQQLRIKNA (63 aa)).

Belongs to the universal ribosomal protein uS4 family. As to quaternary structure, part of the 30S ribosomal subunit. Contacts protein S5. The interaction surface between S4 and S5 is involved in control of translational fidelity.

Its function is as follows. One of the primary rRNA binding proteins, it binds directly to 16S rRNA where it nucleates assembly of the body of the 30S subunit. Functionally, with S5 and S12 plays an important role in translational accuracy. The protein is Small ribosomal subunit protein uS4 of Acinetobacter baumannii (strain ATCC 17978 / DSM 105126 / CIP 53.77 / LMG 1025 / NCDC KC755 / 5377).